Consider the following 164-residue polypeptide: RNA pyrophosphohydrolase (164 aa).

One can recognise a Nudix hydrolase domain in the interval 12 to 158 (RYRQCAGVML…KREVYRAVVK (147 aa)). The short motif at 47 to 68 (GGIDPGETQQEAAMRELEEETG) is the Nudix box element.

The protein belongs to the Nudix hydrolase family. RppH subfamily. Requires a divalent metal cation as cofactor.

Its function is as follows. Accelerates the degradation of transcripts by removing pyrophosphate from the 5'-end of triphosphorylated RNA, leading to a more labile monophosphorylated state that can stimulate subsequent ribonuclease cleavage. This is RNA pyrophosphohydrolase from Erythrobacter litoralis (strain HTCC2594).